A 470-amino-acid polypeptide reads, in one-letter code: MVSLKKKSKRRTTRLRSRIEKKAAESKRKQKRADKKNPQWKSRIPKDPGIPNSFPYKDKILAEIEEQKRIREEEKLARRASGQVDAAMEEEDAVDENGSLMISKIAEAAQASNPDDEEEFVMEEDNLGEAPLLVDSESYEASVKADTSRKAYDKEFKKVVEASDVILYVLDARDPEGTRSKDVERQVLASSAEEKRLIFVINKIDLVPSEVLNKWVTYLRNFFPTIPMRSASGSGNSNLKHQSASASSTISNLLKSLKSYSAKKKLKSSLTVGVIGYPNVGKSSVINALVNRSANGRSAPCPAGNVAGMTTSLREVKLDNKLRLVDSPGIVFPSSDSKDDLYRLVMLNAVSSTKVDDPVAVASYILQFLSRVPGQLERMFQRYELPPLLNTSDIDTATDFLVNIARKRGRLGRGGIPNLNAAANIVINDWHAGRIEWWAEPEVINEKNSSEVQDTQIVTEWAKEFDLNDF.

Positions 1–16 are enriched in basic residues; it reads MVSLKKKSKRRTTRLR. Residues 1 to 56 form a disordered region; sequence MVSLKKKSKRRTTRLRSRIEKKAAESKRKQKRADKKNPQWKSRIPKDPGIPNSFPY. The segment covering 17–27 has biased composition (basic and acidic residues); sequence SRIEKKAAESK. Residues 153–333 form the CP-type G domain; sequence DKEFKKVVEA…LVDSPGIVFP (181 aa). Residues 202 to 205, 276 to 283, and 326 to 329 each bind GTP; these read NKID, GYPNVGKS, and DSPG. The RNA-binding stretch occupies residues 405 to 415; that stretch reads ARKRGRLGRGG.

The protein belongs to the TRAFAC class YlqF/YawG GTPase family.

The protein localises to the nucleus. It is found in the nucleolus. Functionally, required for optimal growth. Required for normal processing of ribosomal pre-rRNA. Required for nuclear export of ribosomal protein rpl2501. In Schizosaccharomyces pombe (strain 972 / ATCC 24843) (Fission yeast), this protein is GTPase grn1.